We begin with the raw amino-acid sequence, 468 residues long: ATP synthase subunit beta (468 aa).

155-162 (GGAGVGKT) contributes to the ATP binding site.

Belongs to the ATPase alpha/beta chains family. In terms of assembly, F-type ATPases have 2 components, CF(1) - the catalytic core - and CF(0) - the membrane proton channel. CF(1) has five subunits: alpha(3), beta(3), gamma(1), delta(1), epsilon(1). CF(0) has three main subunits: a(1), b(2) and c(9-12). The alpha and beta chains form an alternating ring which encloses part of the gamma chain. CF(1) is attached to CF(0) by a central stalk formed by the gamma and epsilon chains, while a peripheral stalk is formed by the delta and b chains.

It localises to the cell membrane. The catalysed reaction is ATP + H2O + 4 H(+)(in) = ADP + phosphate + 5 H(+)(out). In terms of biological role, produces ATP from ADP in the presence of a proton gradient across the membrane. The catalytic sites are hosted primarily by the beta subunits. The sequence is that of ATP synthase subunit beta from Streptococcus thermophilus (strain ATCC BAA-250 / LMG 18311).